The chain runs to 4568 residues: Dynein beta chain, flagellar outer arm (4568 aa).

Residues 1-1880 (MAEDEGMTAA…QVNICDAEIA (1880 aa)) are stem. Coiled-coil stretches lie at residues 277–293 (FQRL…EAND), 1158–1175 (EEAA…RKAL), 1372–1400 (KIDV…RNYD), 1614–1650 (EACT…RVAF), and 1778–1825 (QEIN…RKKL). The segment at 1144-1166 (GVEEEPEYHPDQDPEEAAAKKAA) is disordered. Basic and acidic residues predominate over residues 1150 to 1166 (EYHPDQDPEEAAAKKAA). AAA stretches follow at residues 1881–2102 (YSYE…TLYV), 2164–2385 (EAAH…RNFK), 2493–2738 (QYIP…ITQG), and 2841–3090 (EYNE…FRRY). ATP contacts are provided by residues 1919–1926 (GPAGTGKT), 2202–2209 (GAAGCGKT), and 2530–2537 (GNTGTGKS). The stretch at 2831 to 2848 (LRKTLEDKLREYNESNAV) forms a coiled coil. Residue 2879–2886 (GVGGSGKQ) participates in ATP binding. Coiled coils occupy residues 3106 to 3162 (KMLL…DELI), 3339 to 3425 (KRAA…RLES), and 3648 to 3728 (HERP…KARE). A stalk region spans residues 3106 to 3425 (KMLLQLKRDD…WGAEIKRLES (320 aa)). AAA stretches follow at residues 3481–3711 (LTDD…EIEE) and 3937–4172 (MGRF…TANN).

This sequence belongs to the dynein heavy chain family. As to quaternary structure, consists of at least 3 heavy chains (alpha, beta and gamma), 2 intermediate chains and 8 light chains.

It is found in the cell projection. It localises to the cilium. Its subcellular location is the flagellum. The protein localises to the cytoplasm. The protein resides in the cytoskeleton. It is found in the flagellum axoneme. Its function is as follows. Force generating protein of eukaryotic cilia and flagella. Produces force towards the minus ends of microtubules. Dynein has ATPase activity; the force-producing power stroke is thought to occur on release of ADP. In Chlamydomonas reinhardtii (Chlamydomonas smithii), this protein is Dynein beta chain, flagellar outer arm (ODA4).